Reading from the N-terminus, the 261-residue chain is Neurexophilin-2 (261 aa).

Positions 1–22 (MSLRPLPLLVVPGLLQLLFCDS) are cleaved as a signal peptide. The II stretch occupies residues 23–87 (EEVIHNTESV…WDWLANITEI (65 aa)). N-linked (GlcNAc...) asparagine glycosylation is found at N83, N136, N146, and N152. Positions 88–166 (QEQLARTKRR…LVPPSKVVEF (79 aa)) are III. An IV (linker domain) region spans residues 167-175 (EISPQSTLE). Residues 176 to 261 (TKESKSFNCH…HSETPYLSFG (86 aa)) form a v (Cys-rich) region.

This sequence belongs to the neurexophilin family. Post-translationally, may be proteolytically processed at the boundary between the N-terminal non-conserved and the central conserved domain in neuron-like cells.

It localises to the secreted. May be signaling molecules that resemble neuropeptides and that act by binding to alpha-neurexins and possibly other receptors. The polypeptide is Neurexophilin-2 (Nxph2) (Mus musculus (Mouse)).